The following is a 415-amino-acid chain: Serine--tRNA ligase (415 aa).

L-serine is bound at residue 231–233 (TAE). 262 to 264 (RSE) provides a ligand contact to ATP. E285 serves as a coordination point for L-serine. 349 to 352 (EISS) lines the ATP pocket. L-serine is bound at residue S383.

It belongs to the class-II aminoacyl-tRNA synthetase family. Type-1 seryl-tRNA synthetase subfamily. Homodimer. The tRNA molecule binds across the dimer.

Its subcellular location is the cytoplasm. The catalysed reaction is tRNA(Ser) + L-serine + ATP = L-seryl-tRNA(Ser) + AMP + diphosphate + H(+). It catalyses the reaction tRNA(Sec) + L-serine + ATP = L-seryl-tRNA(Sec) + AMP + diphosphate + H(+). It functions in the pathway aminoacyl-tRNA biosynthesis; selenocysteinyl-tRNA(Sec) biosynthesis; L-seryl-tRNA(Sec) from L-serine and tRNA(Sec): step 1/1. Functionally, catalyzes the attachment of serine to tRNA(Ser). Is also able to aminoacylate tRNA(Sec) with serine, to form the misacylated tRNA L-seryl-tRNA(Sec), which will be further converted into selenocysteinyl-tRNA(Sec). The chain is Serine--tRNA ligase from Helicobacter pylori (strain HPAG1).